A 66-amino-acid polypeptide reads, in one-letter code: Large ribosomal subunit protein bL32 (66 aa).

Positions 1–19 (MAIVPKRKTSKQRKHKRNT) are enriched in basic residues. Residues 1–21 (MAIVPKRKTSKQRKHKRNTHS) are disordered.

Belongs to the bacterial ribosomal protein bL32 family.

The polypeptide is Large ribosomal subunit protein bL32 (Mycoplasmopsis synoviae (strain 53) (Mycoplasma synoviae)).